We begin with the raw amino-acid sequence, 737 residues long: MATPAAVNPSEMGTDLPGPVSMPGAVVGAGQVRMTGAMPGRGGKRRSAGMDFDDEDGEGPSKFSRYDDDQIPGDKERYARENHSEIERRRRNKMTQYITELSDMVPTCSALARKPDKLTILRMAVSHMKSMRGTGNTSTDGAYKPSFLTEQELKHLILEAADGFLFVVAAETGRVIYVSDSVTPVLNHPQSEWFGSTLFEQVHPDDVDKLREQLSTSENSMTGRILDLKTGTVKKEGQQSSMRMCMGSRRSFICRMRCGSAPLDHISLNRLSSMRKRYRNGLGPSKEGEAQYSVVHCTGYIKAWPPAGMTIPDEDTEAGQTSKYCLVAIGRLQVTSSPVSMDMNGLSVPTEFLSRHNSDGIITFVDPRCINVIGYQPQDLLGKDILEFCHPEDQSHLRESFQQVVKLKGQVLSVMYRFRMKNREWMLIRTSSFTFQNPYSDEIEYIICTNTNVKQLQQQQQAELEVHQRDGLTAYDLSQVPVSGVSAGVHESGKTIDKTESLFSQERDPRFSDIYTGISTSEKKMMVPSSTSGGQQLYSQGSPFQPGHSGKSFSSSVIHVPGVNDIQSTAGSAGQNLSQISRQINTGQVSWSGNRPPFSGQQIPAQSNKAQSSPFGIGSSHSYQADPSSYSPLSSPATSSPSGNAYSNLANRNTAFDVSGESSQSGGQFQGRPSEVWSQWQSQHHSQQAGDPHPHTQASQTEVFQDMLPMPGDPTQGTTNYNIEDFADLGMFPPFSE.

The tract at residues 1-73 is disordered; that stretch reads MATPAAVNPS…SRYDDDQIPG (73 aa). The span at 64–73 shows a compositional bias: basic and acidic residues; sequence SRYDDDQIPG. Residues 78–131 form the bHLH domain; sequence YARENHSEIERRRRNKMTQYITELSDMVPTCSALARKPDKLTILRMAVSHMKSM. PAS domains follow at residues 149 to 221 and 340 to 406; these read TEQE…ENSM and SMDM…QVVK. Positions 413–456 constitute a PAC domain; sequence SVMYRFRMKNREWMLIRTSSFTFQNPYSDEIEYIICTNTNVKQL. 2 disordered regions span residues 525–556 and 588–721; these read MMVP…FSSS and QVSW…TTNY. 2 stretches are compositionally biased toward polar residues: residues 528–543 and 588–626; these read PSST…QGSP and QVSW…YQAD. Over residues 627–642 the composition is skewed to low complexity; it reads PSSYSPLSSPATSSPS. The segment covering 643–656 has biased composition (polar residues); it reads GNAYSNLANRNTAF. The segment covering 659-688 has biased composition (low complexity); that stretch reads SGESSQSGGQFQGRPSEVWSQWQSQHHSQQ.

In terms of assembly, efficient DNA binding requires dimerization with another bHLH protein. Heterodimer with the aryl hydrocarbon receptor (AHR), SIM1 or HIF2A/EPAS-1. In terms of tissue distribution, isoform 1 and isoform 2 are most highly expressed in the brain, eye and skeletal muscle and to a lower degree in liver, heart, kidney and swim bladder. Isoform 3 is most highly expressed in the eye, forebrain, midbrain, hindbrain, skeletal muscle, gills and brain but is barely detectable in liver, heart, kidney and swim bladder. Before the pharyngula period isoform 3 is expressed throughout the entire embryo and during this period extensively in the brain and eye.

The protein localises to the nucleus. Its function is as follows. Transcription factor that plays a role in the development of the hypothalamo-pituitary axis. Specifically recognizes the xenobiotic response element (XRE). Isoform 1 acts as a transcriptional activator. Isoform 3 acts as a transcriptional repressor. The protein is Aryl hydrocarbon receptor nuclear translocator 2 of Danio rerio (Zebrafish).